Consider the following 111-residue polypeptide: UPF0060 membrane protein Aave_2845 (111 aa).

4 consecutive transmembrane segments (helical) span residues 7-27, 33-53, 63-83, and 90-110; these read FLLY…PWLW, SAWL…LLTL, AAYG…VDGI, and LAGA…PRGA.

It belongs to the UPF0060 family.

It localises to the cell inner membrane. This is UPF0060 membrane protein Aave_2845 from Paracidovorax citrulli (strain AAC00-1) (Acidovorax citrulli).